A 274-amino-acid chain; its full sequence is Diaminopimelate epimerase (274 aa).

Substrate contacts are provided by Asn-11, Gln-44, and Asn-64. Cys-73 functions as the Proton donor in the catalytic mechanism. Substrate contacts are provided by residues Gly-74–Asn-75, Asn-157, Asn-190, and Glu-208–Arg-209. Cys-217 serves as the catalytic Proton acceptor. Gly-218–Ser-219 contacts substrate.

The protein belongs to the diaminopimelate epimerase family. As to quaternary structure, homodimer.

It is found in the cytoplasm. It carries out the reaction (2S,6S)-2,6-diaminopimelate = meso-2,6-diaminopimelate. It functions in the pathway amino-acid biosynthesis; L-lysine biosynthesis via DAP pathway; DL-2,6-diaminopimelate from LL-2,6-diaminopimelate: step 1/1. In terms of biological role, catalyzes the stereoinversion of LL-2,6-diaminopimelate (L,L-DAP) to meso-diaminopimelate (meso-DAP), a precursor of L-lysine and an essential component of the bacterial peptidoglycan. The protein is Diaminopimelate epimerase of Haemophilus influenzae (strain PittGG).